A 445-amino-acid polypeptide reads, in one-letter code: Tubulin beta-5 chain (445 aa).

8 residues coordinate GTP: Q11, E69, S138, G142, T143, G144, N204, and N226. Position 69 (E69) interacts with Mg(2+). The segment at 420-445 (AEYQQYQDATADDEYEEGEEEEEEAA) is disordered. Positions 429 to 445 (TADDEYEEGEEEEEEAA) are enriched in acidic residues.

This sequence belongs to the tubulin family. Dimer of alpha and beta chains. A typical microtubule is a hollow water-filled tube with an outer diameter of 25 nm and an inner diameter of 15 nM. Alpha-beta heterodimers associate head-to-tail to form protofilaments running lengthwise along the microtubule wall with the beta-tubulin subunit facing the microtubule plus end conferring a structural polarity. Microtubules usually have 13 protofilaments but different protofilament numbers can be found in some organisms and specialized cells. Mg(2+) is required as a cofactor.

The protein localises to the cytoplasm. The protein resides in the cytoskeleton. Functionally, tubulin is the major constituent of microtubules, a cylinder consisting of laterally associated linear protofilaments composed of alpha- and beta-tubulin heterodimers. Microtubules grow by the addition of GTP-tubulin dimers to the microtubule end, where a stabilizing cap forms. Below the cap, tubulin dimers are in GDP-bound state, owing to GTPase activity of alpha-tubulin. The protein is Tubulin beta-5 chain of Gossypium hirsutum (Upland cotton).